The primary structure comprises 82 residues: Delta-conotoxin-like CnVIA (82 aa).

An N-terminal signal peptide occupies residues 1-22; the sequence is MKLTCMMIVAVLFLTAWTFVTA. The propeptide occupies 23 to 49; it reads DDSRNGLENLSPKARHEMKNPEASKSN. 3 disulfide bridges follow: C54–C69, C61–C73, and C68–C78.

It belongs to the conotoxin O1 superfamily. In terms of tissue distribution, expressed by the venom duct.

The protein resides in the secreted. Functionally, delta-conotoxins bind to site 6 of voltage-gated sodium channels (Nav) and inhibit the inactivation process. This chain is Delta-conotoxin-like CnVIA, found in Conus consors (Singed cone).